The primary structure comprises 527 residues: ATP-dependent RNA helicase DBP3 (527 aa).

A compositionally biased stretch (basic residues) spans 1–11 (MSKDHKDKKRK). Residues 1–89 (MSKDHKDKKR…TGYSQSPALT (89 aa)) form a disordered region. Positions 12–24 (HSDEATEEVEKKT) are enriched in basic and acidic residues. Positions 25-44 (KVSKKEKKDKKEKKEKKDKK) are enriched in basic residues. Over residues 45-71 (EKKDKSEKKDKSEKKEKKEKKESEDVP) the composition is skewed to basic and acidic residues. Residues 72–89 (TKSSAVVSTGYSQSPALT) are compositionally biased toward polar residues. A Q motif motif is present at residues 119–145 (LGFDQIDLDSRIASVISKFPTPTPIQA). The region spanning 148–319 (WPYLLSGKDV…STFMNSPVKV (172 aa)) is the Helicase ATP-binding domain. 161–168 (AETGSGKT) contributes to the ATP binding site. The short motif at 266 to 269 (DEAD) is the DEAD box element. One can recognise a Helicase C-terminal domain in the interval 348–497 (KLLSLLRKYQ…PVPDELLKFG (150 aa)).

It belongs to the DEAD box helicase family. DDX5/DBP2 subfamily.

The protein localises to the nucleus. It is found in the nucleolus. It carries out the reaction ATP + H2O = ADP + phosphate + H(+). In terms of biological role, ATP-dependent RNA helicase required for 60S ribosomal subunit synthesis. Involved in efficient pre-rRNA processing, predominantly at site A3, which is necessary for the normal formation of 25S and 5.8S rRNAs. This Debaryomyces hansenii (strain ATCC 36239 / CBS 767 / BCRC 21394 / JCM 1990 / NBRC 0083 / IGC 2968) (Yeast) protein is ATP-dependent RNA helicase DBP3 (DBP3).